We begin with the raw amino-acid sequence, 165 residues long: 6,7-dimethyl-8-ribityllumazine synthase (165 aa).

Residues tryptophan 26, 57–59, and 79–81 contribute to the 5-amino-6-(D-ribitylamino)uracil site; these read SVE and VVV. 84–85 serves as a coordination point for (2S)-2-hydroxy-3-oxobutyl phosphate; it reads AT. Histidine 87 (proton donor) is an active-site residue. Histidine 112 contacts 5-amino-6-(D-ribitylamino)uracil. (2S)-2-hydroxy-3-oxobutyl phosphate is bound at residue arginine 126.

The protein belongs to the DMRL synthase family.

The enzyme catalyses (2S)-2-hydroxy-3-oxobutyl phosphate + 5-amino-6-(D-ribitylamino)uracil = 6,7-dimethyl-8-(1-D-ribityl)lumazine + phosphate + 2 H2O + H(+). Its pathway is cofactor biosynthesis; riboflavin biosynthesis; riboflavin from 2-hydroxy-3-oxobutyl phosphate and 5-amino-6-(D-ribitylamino)uracil: step 1/2. Catalyzes the formation of 6,7-dimethyl-8-ribityllumazine by condensation of 5-amino-6-(D-ribitylamino)uracil with 3,4-dihydroxy-2-butanone 4-phosphate. This is the penultimate step in the biosynthesis of riboflavin. This chain is 6,7-dimethyl-8-ribityllumazine synthase, found in Salinispora arenicola (strain CNS-205).